Reading from the N-terminus, the 898-residue chain is Vacuolar protein sorting-associated protein 41 homolog (898 aa).

The span at 1–10 shows a compositional bias: basic and acidic residues; it reads MDESNDKENE. The tract at residues 1 to 35 is disordered; sequence MDESNDKENEFGDSFLEDSGDITRTTEDEDEAPLE. The stretch at 614-756 is one CHCR repeat; it reads LRLLLDNADS…VADFPTHFSQ (143 aa). The segment at 835–890 adopts an RING-type; atypical zinc-finger fold; it reads CSLCSQVIMNTGQDMIPRKFNDIKVFKCGHIFHLTCSASEIDRRQMIEDGICIACS.

It belongs to the VPS41 family. Probable component of the homotypic fusion and vacuole protein sorting (HOPS) complex consisting of the core class C Vps proteins vps-11, vps-16, vps-18, and which further associates with vps-33.1, vps-39 and vps-41.

It localises to the endosome membrane. The protein resides in the late endosome. It is found in the lysosome. The protein localises to the golgi apparatus. Its subcellular location is the trans-Golgi network. It localises to the early endosome. The protein resides in the cytoplasmic vesicle. It is found in the clathrin-coated vesicle. Its function is as follows. Plays a role in vesicle-mediated protein trafficking to lysosomal compartments including the endocytic membrane transport pathways. Believed to act in part as a core component of the putative HOPS endosomal tethering complex which is proposed to be involved in the rab-5-to-rab-7 endosome conversion probably implicating sand-1, and via binding SNAREs and SNARE complexes to mediate tethering and docking events during SNARE-mediated membrane fusion. The HOPS complex is proposed to be recruited to rab-7 on the late endosomal membrane and to regulate late endocytic, phagocytic and autophagic traffic towards lysosomes. Within the HOPS complex, contributes to the normal development of gut granules in the adult intestine. May mediate the tethering of autophagosomes with lysosomes. Has a role in the negative regulation of apoptosis. Required for uptake of exogenous dsRNA which is used in experimental RNA silencing. This Caenorhabditis briggsae protein is Vacuolar protein sorting-associated protein 41 homolog.